A 196-amino-acid chain; its full sequence is Dual-action ribosomal maturation protein DarP (196 aa).

This sequence belongs to the DarP family.

The protein resides in the cytoplasm. Member of a network of 50S ribosomal subunit biogenesis factors which assembles along the 30S-50S interface, preventing incorrect 23S rRNA structures from forming. Promotes peptidyl transferase center (PTC) maturation. The protein is Dual-action ribosomal maturation protein DarP of Stenotrophomonas maltophilia (strain R551-3).